The chain runs to 4687 residues: Plectin (4687 aa).

The globular 1 stretch occupies residues 1–1473 (MVAGMLMPLD…SELTTLTSQY (1473 aa)). Arginine 21 is subject to Phosphoserine. Phosphotyrosine is present on valine 26. Residues 111 to 158 (RRRSPHVQTMQGPLGCPPKRGPLPAEDPAREERQVYRRKEREEGAPET) are disordered. A compositionally biased stretch (basic and acidic residues) spans 137–154 (DPAREERQVYRRKEREEG). Residues 181 to 406 (DERDRVQKKT…YVSSLYDAMP (226 aa)) are actin-binding. Calponin-homology (CH) domains lie at 185–288 (RVQK…LHFK) and 301–406 (MTAK…DAMP). A Spectrin 1 repeat occupies 648 to 722 (LQSTQRRPEL…ERARNDESQL (75 aa)). Residue serine 723 is modified to Phosphoserine. Spectrin repeat units lie at residues 743–827 (KLLN…REDH) and 840–933 (LQTQ…AIVQ). Position 818 is a phosphothreonine (threonine 818). In terms of domain architecture, SH3 spans 944 to 1001 (RGHVPLLAVCDYKQVEVTVHKGDQCQLVGPAQPFHWKVLSSSGSEAAVPSVCFLVPPP). Serine 1050 carries the phosphoserine modification. A Spectrin 4 repeat occupies 1318–1418 (RERVTQLLER…QKFAKQYINA (101 aa)). A Phosphoserine modification is found at serine 1438. Coiled-coil stretches lie at residues 1472-1692 (QYIK…ERWL) and 1724-2760 (SFAE…TSQA). The segment at 1474 to 2758 (IKFISETLRR…LAHSEEIATS (1285 aa)) is central fibrous rod domain. Residues 1623-1647 (EEAEAQKRQAQEEAERLRRQVQDES) form a disordered region. Phosphoserine is present on serine 1724. Lysine 1728 bears the N6-acetyllysine mark. Disordered stretches follow at residues 1741–1764 (VTVT…ERAR), 1796–1846 (SLAQ…GTAQ), 2096–2139 (EDTM…AEEE), 2164–2188 (LRER…KRLQ), and 2218–2307 (RLRS…DAEM). Basic and acidic residues-rich tracts occupy residues 1801–1839 (DAEK…KQRQ), 2096–2111 (EDTM…EAAR), and 2119–2131 (EEQR…ERVQ). The segment covering 2173 to 2182 (ARQLQLAQEA) has biased composition (low complexity). Residues 2218–2261 (RLRSEAEAARRAAEEAEEAREQAEREAAQSRKQVEEAERLKQSA) are compositionally biased toward basic and acidic residues. Over residues 2262 to 2275 (EEQAQAQAQAQAAA) the composition is skewed to low complexity. The span at 2276 to 2291 (EKLRKEAEQEAARRAQ) shows a compositional bias: basic and acidic residues. At serine 2634 the chain carries Phosphoserine. Lysine 2639 carries the post-translational modification N6-acetyllysine. The tract at residues 2671–2710 (QEEQQRQQQQMEQEKQELVASMEEARRRQREAEEGVRRKQ) is disordered. Residues 2682–2710 (EQEKQELVASMEEARRRQREAEEGVRRKQ) show a composition bias toward basic and acidic residues. The segment at 2759-4687 (QAAATKALPN…SLGGPESAVA (1929 aa)) is globular 2. Serine 2777 is modified (phosphoserine). A Phosphotyrosine modification is found at tyrosine 2784. Plectin repeat units lie at residues 2791–2828 (QKVP…REDV), 2829–2866 (RHYL…PGTA), 2867–2904 (LILL…PELH), 2905–2942 (HKLL…RDHG), 2943–2980 (IRLL…EEMN), and 2984–3018 (ADPS…PETG). Residue serine 2805 is modified to Phosphoserine. Position 2889 is a phosphothreonine (threonine 2889). Tyrosine 3036 bears the Phosphotyrosine mark. Lysine 3056 and lysine 3094 each carry N6-acetyllysine. Plectin repeat units lie at residues 3119–3156 (ALVP…ADEV), 3157–3194 (RQAL…PEVA), 3195–3232 (VALL…PEMH), 3233–3270 (EKLL…REQG), 3271–3308 (LRLL…KETN), and 3311–3346 (LTSP…QLTG). Tyrosine 3365 bears the Phosphotyrosine mark. The residue at position 3423 (lysine 3423) is an N6-acetyllysine. 5 Plectin repeats span residues 3488–3525 (RTLL…ASTA), 3526–3563 (TLLL…PELH), 3564–3601 (EKLL…RDHA), 3602–3639 (IRLL…EEMN), and 3643–3677 (ADPS…PETG). Serine 3583 carries the post-translational modification Phosphoserine. Threonine 3788 bears the Phosphothreonine mark. Tyrosine 3793 bears the Phosphotyrosine mark. Plectin repeat units lie at residues 3823–3860 (WRYL…AEVA), 3861–3898 (RLLL…PELH), 3899–3936 (DRLL…AEEA), 3937–3974 (LRLL…KDTH), and 3978–4011 (SEPS…DNSG). Phosphothreonine is present on threonine 4033. Serine 4057 is modified (phosphoserine). 6 Plectin repeats span residues 4066–4103 (QKFL…PGTA), 4104–4141 (FELL…PEFK), 4142–4179 (DKLL…KDHG), 4180–4217 (IRLL…EEMN), 4221–4255 (TDPS…PQTG), and 4268–4308 (RKTS…HQTY). A binding to intermediate filaments region spans residues 4253 to 4303 (QTGLCLLPLKEKKRERKTSSKSSVRKRRVVIVDPETGKEMSVYEAYRKGLI). A phosphoserine mark is found at serine 4385, serine 4387, serine 4388, serine 4389, serine 4392, serine 4393, serine 4394, and serine 4395. Tyrosine 4396 carries the phosphotyrosine modification. Serine 4399 and serine 4409 each carry phosphoserine. 5 Plectin repeats span residues 4411-4448 (SDPT…NITG), 4449-4486 (QRLL…KIMV), 4487-4524 (DRIN…YEAG), 4525-4562 (QRFL…ARTA), and 4563-4600 (QKLR…EGTG). At threonine 4414 the chain carries Phosphothreonine. Threonine 4542 is subject to Phosphothreonine; by CDK1. Phosphoserine is present on residues serine 4610 and serine 4616. The segment covering 4614 to 4674 (YYSPYSVSGS…SGYGRRYASG (61 aa)) has biased composition (low complexity). Residues 4614-4687 (YYSPYSVSGS…SLGGPESAVA (74 aa)) form a disordered region. Position 4618 is a phosphotyrosine (tyrosine 4618). Phosphoserine occurs at positions 4619, 4621, and 4625. Threonine 4626 is modified (phosphothreonine). The tract at residues 4628–4643 (GSRTGSRTGSRAGSRR) is 4 X 4 AA tandem repeats of G-S-R-X. Serine 4629 is modified (phosphoserine). Omega-N-methylarginine occurs at positions 4630 and 4643. Serine 4645 and serine 4678 each carry phosphoserine.

This sequence belongs to the plakin or cytolinker family. In terms of assembly, homodimer or homotetramer. Interacts (via actin-binding domain) with SYNE3. Interacts (via calponin-homology (CH) 1 domain) with VIM (via rod region). Interacts (via N-terminus) with DST isoform 2 (via N-terminus). Interacts with FER. Interacts with TOR1A. Interacts with ANK3. Identified in complexes that contain VIM, EZR, AHNAK, BFSP1, BFSP2, ANK2, PLEC, PRX and spectrin. Phosphorylated by CDK1; regulates dissociation from intermediate filaments during mitosis. Isoform 2 is phosphorylated on Ser-21 and Tyr-26. In terms of tissue distribution, widely expressed with highest expression in skeletal muscle and lowest in thymus.

It is found in the cytoplasm. The protein resides in the cytoskeleton. Its subcellular location is the cell junction. It localises to the hemidesmosome. The protein localises to the cell projection. It is found in the podosome. In terms of biological role, interlinks intermediate filaments with microtubules and microfilaments and anchors intermediate filaments to desmosomes or hemidesmosomes. May be involved not only in the cross-linking and stabilization of cytoskeletal intermediate filaments network, but also in the regulation of their dynamics. The protein is Plectin (Plec) of Rattus norvegicus (Rat).